The following is a 474-amino-acid chain: Shufflon protein A (474 aa).

The interval 1-361 is constant region; sequence MKKYDRGWAS…TGAILSCQSG (361 aa). The variable region stretch occupies residues 362–474; sequence TWKTSGSLNG…GVFSVFGYQT (113 aa).

In Escherichia coli, this protein is Shufflon protein A.